Here is a 201-residue protein sequence, read N- to C-terminus: Ribonuclease HII (201 aa).

One can recognise an RNase H type-2 domain in the interval 12–201; that stretch reads DLVAGVDEVG…VRELLDVPVQ (190 aa). Positions 18, 19, and 110 each coordinate a divalent metal cation.

The protein belongs to the RNase HII family. The cofactor is Mn(2+). Requires Mg(2+) as cofactor.

The protein resides in the cytoplasm. The catalysed reaction is Endonucleolytic cleavage to 5'-phosphomonoester.. Functionally, endonuclease that specifically degrades the RNA of RNA-DNA hybrids. This Pseudomonas aeruginosa (strain UCBPP-PA14) protein is Ribonuclease HII.